The primary structure comprises 613 residues: MPDYRSKTSTQGRNMAGARALWRATGMKDEDFKKPIIAIANSFTQFVPGHVHLKDLGQLVAREIERAGGVAKEFNTIAVDDGIAMGHDGMLYSLPSREIIADAVEYMVNAHCADAIVCISNCDKITPGMLMAALRLNIPVIFVSGGPMEAGKTKLASHGLDLVDAMVIAADSSASDEKVAEYERSACPTCGSCSGMFTANSMNCLTEALGLALPGNGSTLATHADREQLFLTAGRTIVELCKRYYGENDESVLPRSIANFKAFENAMMLDIAMGGSTNTILHLLAAAQEGEVEFDLRDIDRLSRKVPQLCKVAPNIQKYHMEDVHRAGGIFSILGSLARGGLLHTDLPTVHSRSMEEAIAKWDITQTDDEAVHTFFKAGPAGIPTQTAFSQSTRWETLDDDRENGCIRSFEHAYSQEGGLAVLYGNIALDGCVVKTAGVDESIHVFEGNAKIFESQDSAVRGILADEVKAGDIVIIRYEGPKGGPGMQEMLYPTSYLKSKGLGKACALLTDGRFSGGTSGLSIGHASPEAAAGGAIGLVRDGDKVLIDIPNRSINLLVSDEELAERRVEQDKKGWKPAEVRPRKVTTALKAYALLATSADKGAVRNKAMLEGL.

Residue Asp-81 participates in Mg(2+) binding. [2Fe-2S] cluster is bound at residue Cys-122. Mg(2+) is bound by residues Asp-123 and Lys-124. Position 124 is an N6-carboxylysine (Lys-124). Residue Cys-193 participates in [2Fe-2S] cluster binding. Glu-489 contributes to the Mg(2+) binding site. Ser-515 serves as the catalytic Proton acceptor.

It belongs to the IlvD/Edd family. In terms of assembly, homodimer. [2Fe-2S] cluster is required as a cofactor. Mg(2+) serves as cofactor.

It carries out the reaction (2R)-2,3-dihydroxy-3-methylbutanoate = 3-methyl-2-oxobutanoate + H2O. The enzyme catalyses (2R,3R)-2,3-dihydroxy-3-methylpentanoate = (S)-3-methyl-2-oxopentanoate + H2O. It functions in the pathway amino-acid biosynthesis; L-isoleucine biosynthesis; L-isoleucine from 2-oxobutanoate: step 3/4. It participates in amino-acid biosynthesis; L-valine biosynthesis; L-valine from pyruvate: step 3/4. In terms of biological role, functions in the biosynthesis of branched-chain amino acids. Catalyzes the dehydration of (2R,3R)-2,3-dihydroxy-3-methylpentanoate (2,3-dihydroxy-3-methylvalerate) into 2-oxo-3-methylpentanoate (2-oxo-3-methylvalerate) and of (2R)-2,3-dihydroxy-3-methylbutanoate (2,3-dihydroxyisovalerate) into 2-oxo-3-methylbutanoate (2-oxoisovalerate), the penultimate precursor to L-isoleucine and L-valine, respectively. The chain is Dihydroxy-acid dehydratase from Pseudomonas putida (strain GB-1).